The chain runs to 61 residues: Large ribosomal subunit protein uL29 (61 aa).

This sequence belongs to the universal ribosomal protein uL29 family.

This chain is Large ribosomal subunit protein uL29, found in Campylobacter lari (strain RM2100 / D67 / ATCC BAA-1060).